The primary structure comprises 492 residues: MDPYRHRPSSAFNAPFWTTNSGAPVWNNNSSMTVGPRGPILLEDYHLVEKLANFDRERIPERVVHARGASAKGFFEVTHDITNLSCADFLRAPGVQTPVIVRFSTVIHERGSPETLRDPRGFAVKFYTREGNFDLVGNNFPVFFIRDGMKFTRHVHPLKPNPKSHIQENWRILDFFSHHPESLNMFSFLFDDIGIPQDYRHMDGSGVNTYTLINKAGKAHYVKFHWRPTCGVKSLLEEDAIRVGGSNHSHATQDLYDSIAAGNYPEWKLFIQTIDPDHEDKYDFDPLDVTKTWPEDILPLQPVGRMVLNKNIDNFFAENEQLAFCPAIIVPGVYYSDDKLLQTRIFSYADTQRHRLGPNYLQLPANAPKCAHHNNHHEGFMNFMHRDEEVNYFPSRFDPSRHAERYPHPPAVCSGKRERCIIEKENNFKEPGERYRSWTPDRQERFVRRWVDALSDTRVTHEIRSIWISYWSQADRSLGQKLASHLNVRPSI.

Residues H65 and N138 contribute to the active site. Y348 is a binding site for heme.

The protein belongs to the catalase family. Homotetramer. The cofactor is heme. In terms of tissue distribution, high expression in seeds and early seedlings.

The protein resides in the glyoxysome. The catalysed reaction is 2 H2O2 = O2 + 2 H2O. Functionally, occurs in almost all aerobically respiring organisms and serves to protect cells from the toxic effects of hydrogen peroxide. This Cucurbita pepo (Vegetable marrow) protein is Catalase isozyme 1 (CAT1).